A 567-amino-acid polypeptide reads, in one-letter code: Mitochondrial distribution and morphology protein 34 (567 aa).

The SMP-LTD domain occupies 1-224 (MSFKFNEESF…LPSALFNMSR (224 aa)). The segment covering 392-416 (NKATETSSNLNADSEITPVSSSHNA) has biased composition (polar residues). The disordered stretch occupies residues 392–453 (NKATETSSNL…NRSSSFTSSI (62 aa)). Positions 417-452 (TSSVNTITSLTTSSLGSTAGSSNSKNTNRSSSFTSS) are enriched in low complexity.

It belongs to the MDM34 family. In terms of assembly, component of the ER-mitochondria encounter structure (ERMES) or MDM complex, composed of MMM1, MDM10, MDM12 and MDM34.

It localises to the mitochondrion outer membrane. In terms of biological role, component of the ERMES/MDM complex, which serves as a molecular tether to connect the endoplasmic reticulum (ER) and mitochondria. Components of this complex are involved in the control of mitochondrial shape and protein biogenesis, and function in nonvesicular lipid trafficking between the ER and mitochondria. MDM34 is required for the interaction of the ER-resident membrane protein MMM1 and the outer mitochondrial membrane-resident beta-barrel protein MDM10. The protein is Mitochondrial distribution and morphology protein 34 of Vanderwaltozyma polyspora (strain ATCC 22028 / DSM 70294 / BCRC 21397 / CBS 2163 / NBRC 10782 / NRRL Y-8283 / UCD 57-17) (Kluyveromyces polysporus).